We begin with the raw amino-acid sequence, 170 residues long: ATP synthase subunit b (170 aa).

A helical membrane pass occupies residues 20–42 (QLLAMLVLLALLKKFALGPLLNI).

This sequence belongs to the ATPase B chain family. As to quaternary structure, F-type ATPases have 2 components, F(1) - the catalytic core - and F(0) - the membrane proton channel. F(1) has five subunits: alpha(3), beta(3), gamma(1), delta(1), epsilon(1). F(0) has three main subunits: a(1), b(2) and c(10-14). The alpha and beta chains form an alternating ring which encloses part of the gamma chain. F(1) is attached to F(0) by a central stalk formed by the gamma and epsilon chains, while a peripheral stalk is formed by the delta and b chains.

The protein localises to the cell membrane. Functionally, f(1)F(0) ATP synthase produces ATP from ADP in the presence of a proton or sodium gradient. F-type ATPases consist of two structural domains, F(1) containing the extramembraneous catalytic core and F(0) containing the membrane proton channel, linked together by a central stalk and a peripheral stalk. During catalysis, ATP synthesis in the catalytic domain of F(1) is coupled via a rotary mechanism of the central stalk subunits to proton translocation. In terms of biological role, component of the F(0) channel, it forms part of the peripheral stalk, linking F(1) to F(0). The protein is ATP synthase subunit b of Bacillus velezensis (strain DSM 23117 / BGSC 10A6 / LMG 26770 / FZB42) (Bacillus amyloliquefaciens subsp. plantarum).